We begin with the raw amino-acid sequence, 102 residues long: Mitochondrial import inner membrane translocase subunit Tim10 B (102 aa).

Positions 27–51 match the Twin CX3C motif motif; it reads CFQRCVPSLHHRALDAEEEACLHSC. Intrachain disulfides connect cysteine 27–cysteine 51 and cysteine 31–cysteine 47.

Component of the TIM22 complex, which core is composed of TIMM22, associated with TIMM10 (TIMM10A and/or TIMM10B), TIMM9, AGK and TIMM29.

The protein localises to the mitochondrion inner membrane. Functionally, component of the TIM22 complex, a complex that mediates the import and insertion of multi-pass transmembrane proteins into the mitochondrial inner membrane. The TIM22 complex forms a twin-pore translocase that uses the membrane potential as the external driving force. In the TIM22 complex, it may act as a docking point for the soluble 70 kDa complex that guides the target proteins in transit through the aqueous mitochondrial intermembrane space. The polypeptide is Mitochondrial import inner membrane translocase subunit Tim10 B (TIMM10B) (Pongo abelii (Sumatran orangutan)).